The sequence spans 302 residues: Deubiquitinase OTUD6B (302 aa).

Over residues 1-10 (MEGSEDEEAE) the composition is skewed to acidic residues. Disordered regions lie at residues 1–52 (MEGS…KQLA) and 99–121 (EQQIQHPRISKAQKRREKKAALE). Over residues 106 to 116 (RISKAQKRREK) the composition is skewed to basic residues. In terms of domain architecture, OTU spans 156–293 (LEIKQIPSDG…GEHYNSVKLL (138 aa)). A cys-loop region spans residues 161–167 (IPSDGHC). The active site involves Asp164. Cys167 (nucleophile) is an active-site residue. Residues 228 to 238 (IANTAAWGGQL) are variable-loop. A his-loop region spans residues 276–286 (YMRHAYGLGEH). His286 is an active-site residue.

It carries out the reaction Thiol-dependent hydrolysis of ester, thioester, amide, peptide and isopeptide bonds formed by the C-terminal Gly of ubiquitin (a 76-residue protein attached to proteins as an intracellular targeting signal).. In terms of biological role, deubiquitinating enzyme that may play a role in the ubiquitin-dependent regulation of different cellular processes. The protein is Deubiquitinase OTUD6B (OTUD6B) of Gallus gallus (Chicken).